Here is a 237-residue protein sequence, read N- to C-terminus: uncharacterized protein (237 aa).

A helical transmembrane segment spans residues 53–70; sequence LIFLATVLAGLILFYFGV. The tract at residues 85–155 is disordered; that stretch reads PPIVIKPVAP…TQEKKDVKVA (71 aa). Positions 98-157 form a coiled coil; it reads KTQESNQTTKKEVKQEEQKKEEPKKMVQKQETQEKREVKKSEKNEVKQTQEKKDVKVAKK. 2 stretches are compositionally biased toward basic and acidic residues: residues 106–122 and 128–155; these read TKKE…EPKK and ETQE…VKVA. The 73-residue stretch at 165–237 folds into the SPOR domain; it reads AANLRTYKFQ…HFKDAIFVRK (73 aa).

The protein localises to the membrane. This is an uncharacterized protein from Aquifex aeolicus (strain VF5).